The following is a 96-amino-acid chain: Co-chaperonin GroES (96 aa).

It belongs to the GroES chaperonin family. Heptamer of 7 subunits arranged in a ring. Interacts with the chaperonin GroEL.

It is found in the cytoplasm. In terms of biological role, together with the chaperonin GroEL, plays an essential role in assisting protein folding. The GroEL-GroES system forms a nano-cage that allows encapsulation of the non-native substrate proteins and provides a physical environment optimized to promote and accelerate protein folding. GroES binds to the apical surface of the GroEL ring, thereby capping the opening of the GroEL channel. The protein is Co-chaperonin GroES of Haemophilus influenzae (strain 86-028NP).